The sequence spans 381 residues: 6-oxocyclohex-1-ene-1-carbonyl-CoA hydrolase (381 aa).

This sequence belongs to the enoyl-CoA hydratase/isomerase family. In terms of assembly, homohexamer.

The catalysed reaction is 6-oxocyclohex-1-ene-1-carbonyl-CoA + 2 H2O = 3-hydroxy-6-carboxyhexanoyl-CoA + H(+). Its pathway is aromatic compound metabolism; benzoyl-CoA degradation. Functionally, involved in the central benzoyl-CoA catabolism. Catalyzes the addition of one molecule of water to the double bond and the hydrolytic cleavage of C-C bond in the alicyclic ring, 6-oxocyclohex-1-ene-1-carbonyl-CoA (6-OCH-CoA) to yield 3-hydroxypimelyl-CoA. This Geobacter metallireducens (strain ATCC 53774 / DSM 7210 / GS-15) protein is 6-oxocyclohex-1-ene-1-carbonyl-CoA hydrolase.